The following is a 125-amino-acid chain: MMFSKPVVLATTALATFAAATPLVARTEPTCSSTEIKCCENVGTAAVVSSVLTPILVSIPLVGPLLSLLGLNAVVALLFGTVDVVLGLTCSGIDVGGSCNAQTVCCENVQFNGLINVGCVAIDIL.

An N-terminal signal peptide occupies residues 1 to 20 (MMFSKPVVLATTALATFAAA). Disulfide bonds link C31–C105, C38–C99, C39–C90, and C106–C119.

It belongs to the fungal hydrophobin family. Self-assembles to form functional amyloid fibrils called rodlets. Self-assembly into fibrillar rodlets occurs spontaneously at hydrophobic:hydrophilic interfaces and the rodlets further associate laterally to form amphipathic monolayers.

The protein resides in the secreted. Its subcellular location is the cell wall. In terms of biological role, aerial growth, conidiation, and dispersal of filamentous fungi in the environment rely upon a capability of their secreting small amphipathic proteins called hydrophobins (HPBs) with low sequence identity. Class I can self-assemble into an outermost layer of rodlet bundles on aerial cell surfaces, conferring cellular hydrophobicity that supports fungal growth, development and dispersal; whereas Class II form highly ordered films at water-air interfaces through intermolecular interactions but contribute nothing to the rodlet structure. Hydph8 is an unclassified hydrophobin involved in mycelial growth. This chain is Unclassified hydrophobin 8, found in Pleurotus ostreatus (strain PC15) (Oyster mushroom).